Here is a 605-residue protein sequence, read N- to C-terminus: Elongation factor 4 (605 aa).

In terms of domain architecture, tr-type G spans 11-193 (KNIRNFSIIA…TLVDVIPAPT (183 aa)). GTP is bound by residues 23 to 28 (DHGKST) and 140 to 143 (NKID).

The protein belongs to the TRAFAC class translation factor GTPase superfamily. Classic translation factor GTPase family. LepA subfamily.

It is found in the cell inner membrane. It catalyses the reaction GTP + H2O = GDP + phosphate + H(+). Required for accurate and efficient protein synthesis under certain stress conditions. May act as a fidelity factor of the translation reaction, by catalyzing a one-codon backward translocation of tRNAs on improperly translocated ribosomes. Back-translocation proceeds from a post-translocation (POST) complex to a pre-translocation (PRE) complex, thus giving elongation factor G a second chance to translocate the tRNAs correctly. Binds to ribosomes in a GTP-dependent manner. In Acinetobacter baumannii (strain SDF), this protein is Elongation factor 4.